A 258-amino-acid polypeptide reads, in one-letter code: MLAKRIIPCLDVINNQVIKGIQFQNHQIIGDIVSLAQYYSQEGADELVFYDIMASPNNQTVSKKWVAKIAEVINIPFCVAGGISTLYQAKEILKFGADKISINSPALLNPSLIQKLADHLGTQCVVVGIDAWYNAQLGTYQIKCFSGNSSRMQSTTWELLDWVIQIQQYGAGEIVLNMMNQDGMQNGYDLKQLSKIRKHCTIPLIASGGAGTAQHFLDVFQYADVDGALAASVFHKKIIKINELKNFLIKQGVEIRLC.

Residues Asp-11 and Asp-130 contribute to the active site.

The protein belongs to the HisA/HisF family. As to quaternary structure, heterodimer of HisH and HisF.

The protein localises to the cytoplasm. The catalysed reaction is 5-[(5-phospho-1-deoxy-D-ribulos-1-ylimino)methylamino]-1-(5-phospho-beta-D-ribosyl)imidazole-4-carboxamide + L-glutamine = D-erythro-1-(imidazol-4-yl)glycerol 3-phosphate + 5-amino-1-(5-phospho-beta-D-ribosyl)imidazole-4-carboxamide + L-glutamate + H(+). It participates in amino-acid biosynthesis; L-histidine biosynthesis; L-histidine from 5-phospho-alpha-D-ribose 1-diphosphate: step 5/9. IGPS catalyzes the conversion of PRFAR and glutamine to IGP, AICAR and glutamate. The HisF subunit catalyzes the cyclization activity that produces IGP and AICAR from PRFAR using the ammonia provided by the HisH subunit. The protein is Imidazole glycerol phosphate synthase subunit HisF of Blochmanniella floridana.